We begin with the raw amino-acid sequence, 91 residues long: Cell division topological specificity factor (91 aa).

The protein belongs to the MinE family.

Its function is as follows. Prevents the cell division inhibition by proteins MinC and MinD at internal division sites while permitting inhibition at polar sites. This ensures cell division at the proper site by restricting the formation of a division septum at the midpoint of the long axis of the cell. This Bradyrhizobium sp. (strain BTAi1 / ATCC BAA-1182) protein is Cell division topological specificity factor.